We begin with the raw amino-acid sequence, 297 residues long: Universal stress protein MT2698 (297 aa).

ATP-binding positions include Gly-13, Ala-43, 117 to 123, Arg-127, 131 to 132, Gly-165, Asp-198, 262 to 268, and 276 to 278; these read GCLGSGR, SV, GSRGRGG, and SVG.

The protein belongs to the universal stress protein A family. Homodimer.

Its function is as follows. May play a role in the establishment of a persistent infection (latency) in the host. The chain is Universal stress protein MT2698 from Mycobacterium tuberculosis (strain CDC 1551 / Oshkosh).